Here is a 298-residue protein sequence, read N- to C-terminus: ATP phosphoribosyltransferase (298 aa).

This sequence belongs to the ATP phosphoribosyltransferase family. Long subfamily. Mg(2+) is required as a cofactor.

It is found in the cytoplasm. The enzyme catalyses 1-(5-phospho-beta-D-ribosyl)-ATP + diphosphate = 5-phospho-alpha-D-ribose 1-diphosphate + ATP. Its pathway is amino-acid biosynthesis; L-histidine biosynthesis; L-histidine from 5-phospho-alpha-D-ribose 1-diphosphate: step 1/9. With respect to regulation, feedback inhibited by histidine. Its function is as follows. Catalyzes the condensation of ATP and 5-phosphoribose 1-diphosphate to form N'-(5'-phosphoribosyl)-ATP (PR-ATP). Has a crucial role in the pathway because the rate of histidine biosynthesis seems to be controlled primarily by regulation of HisG enzymatic activity. The protein is ATP phosphoribosyltransferase of Aeromonas salmonicida (strain A449).